The primary structure comprises 388 residues: Succinate--CoA ligase [ADP-forming] subunit beta (388 aa).

The region spanning 9–244 (KALFAEYGLP…PSQDDAREAH (236 aa)) is the ATP-grasp domain. Residues K46, 53-55 (GRG), E99, T102, and E107 each bind ATP. Mg(2+) is bound by residues N199 and D213. Substrate is bound by residues N264 and 321-323 (GIV).

It belongs to the succinate/malate CoA ligase beta subunit family. As to quaternary structure, heterotetramer of two alpha and two beta subunits. Mg(2+) serves as cofactor.

It catalyses the reaction succinate + ATP + CoA = succinyl-CoA + ADP + phosphate. The catalysed reaction is GTP + succinate + CoA = succinyl-CoA + GDP + phosphate. It functions in the pathway carbohydrate metabolism; tricarboxylic acid cycle; succinate from succinyl-CoA (ligase route): step 1/1. In terms of biological role, succinyl-CoA synthetase functions in the citric acid cycle (TCA), coupling the hydrolysis of succinyl-CoA to the synthesis of either ATP or GTP and thus represents the only step of substrate-level phosphorylation in the TCA. The beta subunit provides nucleotide specificity of the enzyme and binds the substrate succinate, while the binding sites for coenzyme A and phosphate are found in the alpha subunit. The chain is Succinate--CoA ligase [ADP-forming] subunit beta from Shewanella halifaxensis (strain HAW-EB4).